Consider the following 93-residue polypeptide: Large ribosomal subunit protein uL23cz/uL23cy (93 aa).

It belongs to the universal ribosomal protein uL23 family. Part of the 50S ribosomal subunit.

It is found in the plastid. Its subcellular location is the chloroplast. Binds to 23S rRNA. This Acorus calamus (Sweet flag) protein is Large ribosomal subunit protein uL23cz/uL23cy (rpl23-A).